The following is a 488-amino-acid chain: 3-octaprenyl-4-hydroxybenzoate carboxy-lyase (488 aa).

Residue Asn172 participates in Mn(2+) binding. Residues Ile175–Arg177, Arg189–Leu191, and Arg194–Gly195 each bind prenylated FMN. Position 238 (Glu238) interacts with Mn(2+). Catalysis depends on Asp287, which acts as the Proton donor.

This sequence belongs to the UbiD family. Homohexamer. It depends on prenylated FMN as a cofactor. Mn(2+) is required as a cofactor.

It localises to the cell membrane. The catalysed reaction is a 4-hydroxy-3-(all-trans-polyprenyl)benzoate + H(+) = a 2-(all-trans-polyprenyl)phenol + CO2. The protein operates within cofactor biosynthesis; ubiquinone biosynthesis. In terms of biological role, catalyzes the decarboxylation of 3-octaprenyl-4-hydroxy benzoate to 2-octaprenylphenol, an intermediate step in ubiquinone biosynthesis. The polypeptide is 3-octaprenyl-4-hydroxybenzoate carboxy-lyase (Stutzerimonas stutzeri (strain A1501) (Pseudomonas stutzeri)).